Reading from the N-terminus, the 203-residue chain is Ras-related protein Rab-24 (203 aa).

Residue Tyr17 is modified to Phosphotyrosine. GTP-binding residues include Gly19, Lys20, Thr21, and Thr40. The Mg(2+) site is built by Thr21, Thr40, and Asp63. The segment at 30 to 45 (DRFLVGPYQNTIGAAF) is switch I. The switch II stretch occupies residues 63 to 80 (DTAGSERYEAMSRIYYRG). GTP contacts are provided by Gly66, Lys121, Asp123, and Lys156. Tyr172 carries the phosphotyrosine modification. 2 S-geranylgeranyl cysteine lipidation sites follow: Cys200 and Cys201.

The protein belongs to the small GTPase superfamily. Rab family. As to quaternary structure, interacts with ZFYVE20. Does not interact with the GDP dissociation inhibitors ARHGDIA and ARHGDIB. It depends on Mg(2+) as a cofactor. Prenylated; prenylation is required for RAB24 localization to autophagosomes. Isoprenylation is inefficient compared to other Rab family members. Post-translationally, phosphorylated at Tyr-17 and Tyr-172. Cytosolic pool of RAB24 is more phosphorylated than the membrane-associated pool. Widely expressed, with highest expression in brain.

The protein resides in the cytoplasm. Its subcellular location is the cytosol. The protein localises to the membrane. It localises to the cytoplasmic vesicle. It is found in the autophagosome membrane. The protein resides in the perinuclear region. Its subcellular location is the cytoskeleton. The protein localises to the spindle. The enzyme catalyses GTP + H2O = GDP + phosphate + H(+). Its activity is regulated as follows. Regulated by guanine nucleotide exchange factors (GEFs) which promote the exchange of bound GDP for free GTP. Regulated by GTPase activating proteins (GAPs) which increase the GTP hydrolysis activity. Inhibited by GDP dissociation inhibitors (GDIs). Functionally, the small GTPases Rab are key regulators of intracellular membrane trafficking, from the formation of transport vesicles to their fusion with membranes. Rabs cycle between an inactive GDP-bound form and an active GTP-bound form that is able to recruit to membranes different sets of downstream effectors directly responsible for vesicle formation, movement, tethering and fusion. RAB24 is an atypical RAB protein that presents low GTPase activity and thereby exists predominantly in the GTP-bound active state. RAB24 is required for the clearance of late autophagic vacuoles under basal conditions. It is not needed for starvation-induced autophagy. Involved in the modulation of meiotic apparatus assembly and meiotic progression during oocyte maturation, possibly through regulation of kinetochore-microtubule interaction. This is Ras-related protein Rab-24 from Mus musculus (Mouse).